The primary structure comprises 158 residues: COP9 signalosome complex subunit 9 (158 aa).

In terms of domain architecture, PCI spans 5-119; that stretch reads LLRNLIEDKT…SVARRATVLE (115 aa).

In terms of assembly, component of a COP9 signalosome-like (CSN) complex.

The protein localises to the cytoplasm. It localises to the nucleus. Its function is as follows. Component of the COP9 signalosome (CSN) complex that acts as a regulator of the ubiquitin (Ubl) conjugation pathway by mediating the deneddylation of the cullin subunit of SCF-type E3 ubiquitin-protein ligase complexes. The complex is involved in the regulation of the mating pheromone response. The sequence is that of COP9 signalosome complex subunit 9 (CSN9) from Kluyveromyces lactis (strain ATCC 8585 / CBS 2359 / DSM 70799 / NBRC 1267 / NRRL Y-1140 / WM37) (Yeast).